The sequence spans 344 residues: Arginine N-succinyltransferase (344 aa).

Leucine 125 is a binding site for succinyl-CoA. Residue histidine 229 is the Proton donor of the active site.

It belongs to the arginine N-succinyltransferase family.

The catalysed reaction is succinyl-CoA + L-arginine = N(2)-succinyl-L-arginine + CoA + H(+). Its pathway is amino-acid degradation; L-arginine degradation via AST pathway; L-glutamate and succinate from L-arginine: step 1/5. Its function is as follows. Catalyzes the transfer of succinyl-CoA to arginine to produce N(2)-succinylarginine. This chain is Arginine N-succinyltransferase, found in Citrobacter koseri (strain ATCC BAA-895 / CDC 4225-83 / SGSC4696).